A 207-amino-acid polypeptide reads, in one-letter code: Venom allergen 5 (207 aa).

Intrachain disulfides connect C4/C16, C8/C105, and C29/C97. One can recognise an SCP domain in the interval 49 to 192 (DEHNRFRQKV…MKSHYLVCNY (144 aa)). Y111 is modified (phosphotyrosine). The N-linked (Glc) (glycation) lysine glycan is linked to K141. C173 and C190 form a disulfide bridge.

It belongs to the CRISP family. Venom allergen 5-like subfamily. In terms of processing, glycosylated. As to expression, expressed by the venom gland.

The protein resides in the secreted. This is Venom allergen 5 from Polybia paulista (Neotropical social wasp).